Reading from the N-terminus, the 386-residue chain is 8-amino-7-oxononanoate synthase (386 aa).

Arg31 is a substrate binding site. Position 109 to 110 (109 to 110 (GY)) interacts with pyridoxal 5'-phosphate. A substrate-binding site is contributed by His134. Pyridoxal 5'-phosphate contacts are provided by residues Ser180, 205-208 (DEAH), and 236-239 (TLSK). The residue at position 239 (Lys239) is an N6-(pyridoxal phosphate)lysine. A substrate-binding site is contributed by Thr349.

It belongs to the class-II pyridoxal-phosphate-dependent aminotransferase family. BioF subfamily. As to quaternary structure, homodimer. The cofactor is pyridoxal 5'-phosphate.

The catalysed reaction is 6-carboxyhexanoyl-[ACP] + L-alanine + H(+) = (8S)-8-amino-7-oxononanoate + holo-[ACP] + CO2. The protein operates within cofactor biosynthesis; biotin biosynthesis. Functionally, catalyzes the decarboxylative condensation of pimeloyl-[acyl-carrier protein] and L-alanine to produce 8-amino-7-oxononanoate (AON), [acyl-carrier protein], and carbon dioxide. This chain is 8-amino-7-oxononanoate synthase, found in Mycobacterium bovis (strain ATCC BAA-935 / AF2122/97).